The primary structure comprises 625 residues: Pentatricopeptide repeat-containing protein At2g36980, mitochondrial (625 aa).

The transit peptide at 1–7 (MSVLVRL) directs the protein to the mitochondrion. 15 PPR repeats span residues 3–33 (VLVRLTSKIASLAKSGRIASARQVFDGMPEL), 34–68 (DTVAWNTMLTSYSRLGLHQEAIALFTQLRFSDAKP), 69–103 (DDYSFTAILSTCASLGNVKFGRKIQSLVIRSGFCA), 104–134 (SLPVNNSLIDMYGKCSDTLSANKVFRDMCCD), 137–167 (NEVTWCSLLFAYMNAEQFEAALDVFVEMPKR), 168–202 (VAFAWNIMISGHAHCGKLESCLSLFKEMLESEFKP), 203–238 (DCYTFSSLMNACSADSSNVVYGRMVHAVMLKNGWSS), 239–269 (AVEAKNSVLSFYTKLGSRDDAMRELESIEVL), 270–300 (TQVSWNSIIDACMKIGETEKALEVFHLAPEK), 301–335 (NIVTWTTMITGYGRNGDGEQALRFFVEMMKSGVDS), 336–370 (DHFAYGAVLHACSGLALLGHGKMIHGCLIHCGFQG), 371–401 (YAYVGNALVNLYAKCGDIKEADRAFGDIANK), 402–436 (DLVSWNTMLFAFGVHGLADQALKLYDNMIASGIKP), 437–471 (DNVTFIGLLTTCSHSGLVEEGCMIFESMVKDYRIP), and 473–503 (EVDHVTCMIDMFGRGGHLAEAKDLATTYSSL). The type E motif stretch occupies residues 512-587 (SWETLLGACS…TPGCSWIEVG (76 aa)). Positions 588–618 (NQVSTFVVGDSSHPRLEELSETLNCLQHEMR) are type E(+) motif.

It belongs to the PPR family. PCMP-E subfamily.

The protein localises to the mitochondrion. The chain is Pentatricopeptide repeat-containing protein At2g36980, mitochondrial (PCMP-E73) from Arabidopsis thaliana (Mouse-ear cress).